A 2617-amino-acid chain; its full sequence is DNA-directed RNA polymerase subunit beta'' (2617 aa).

Zn(2+)-binding residues include C263, C334, C341, and C344.

The protein belongs to the RNA polymerase beta' chain family. RpoC2 subfamily. In plastids the minimal PEP RNA polymerase catalytic core is composed of four subunits: alpha, beta, beta', and beta''. When a (nuclear-encoded) sigma factor is associated with the core the holoenzyme is formed, which can initiate transcription. The cofactor is Zn(2+).

It localises to the plastid. The protein localises to the chloroplast. The enzyme catalyses RNA(n) + a ribonucleoside 5'-triphosphate = RNA(n+1) + diphosphate. In terms of biological role, DNA-dependent RNA polymerase catalyzes the transcription of DNA into RNA using the four ribonucleoside triphosphates as substrates. In Oedogonium cardiacum (Filamentous green alga), this protein is DNA-directed RNA polymerase subunit beta''.